Consider the following 312-residue polypeptide: Urease accessory protein UreD (312 aa).

Over residues 1–15 (MLAEQFTDKNKHAEQ) the composition is skewed to basic and acidic residues. The tract at residues 1–24 (MLAEQFTDKNKHAEQELSPGSSAV) is disordered.

Belongs to the UreD family. UreD, UreF and UreG form a complex that acts as a GTP-hydrolysis-dependent molecular chaperone, activating the urease apoprotein by helping to assemble the nickel containing metallocenter of UreC. The UreE protein probably delivers the nickel.

It is found in the cytoplasm. In terms of biological role, required for maturation of urease via the functional incorporation of the urease nickel metallocenter. The chain is Urease accessory protein UreD from Hahella chejuensis (strain KCTC 2396).